A 104-amino-acid chain; its full sequence is MNKSILHTIIIYTLASCPYCIKAKALLDKKNVIYEEIEVSNFTQEEKEAFIKKSGGKNTVPQIFIDNMHVGGCDDLFNLEQDGRLDKLLETQPKNKNSLTVSGA.

The region spanning 1–96 (MNKSILHTII…KLLETQPKNK (96 aa)) is the Glutaredoxin domain. A disulfide bridge links cysteine 17 with cysteine 20.

This sequence belongs to the glutaredoxin family. As to quaternary structure, monomer.

The protein resides in the cytoplasm. Its function is as follows. Has a glutathione-disulfide oxidoreductase activity in the presence of NADPH and glutathione reductase. Reduces low molecular weight disulfides and proteins. This is Glutaredoxin 1 (grxC1) from Rickettsia typhi (strain ATCC VR-144 / Wilmington).